The primary structure comprises 138 residues: Putative acyl-CoA thioesterase YneP (138 aa).

Residue D16 is part of the active site.

It belongs to the 4-hydroxybenzoyl-CoA thioesterase family.

Has acyl-CoA thioesterase activity. The protein is Putative acyl-CoA thioesterase YneP (yneP) of Bacillus subtilis (strain 168).